We begin with the raw amino-acid sequence, 89 residues long: Large ribosomal subunit protein bL28 (89 aa).

The protein belongs to the bacterial ribosomal protein bL28 family.

The sequence is that of Large ribosomal subunit protein bL28 from Chlamydia caviae (strain ATCC VR-813 / DSM 19441 / 03DC25 / GPIC) (Chlamydophila caviae).